The sequence spans 1305 residues: Contactin-associated protein like 5-4 (1305 aa).

Positions 1–24 are cleaved as a signal peptide; the sequence is MNSVRRLNSILTLVLSGLWHLGLT. Residues 25-1237 are Extracellular-facing; that stretch reads ATNYNCDEPL…LTDTVQSDSA (1213 aa). The F5/8 type C domain maps to 30–174; the sequence is CDEPLASFLS…IGMRVEVYGC (145 aa). A disulfide bond links C30 and C174. 2 Laminin G-like domains span residues 180–360 and 367–544; these read IVGF…TFSC and PITF…IDLC. A glycan (N-linked (GlcNAc...) asparagine) is linked at N282. C329 and C360 are disulfide-bonded. N-linked (GlcNAc...) asparagine glycosylation is present at N496. Intrachain disulfides connect C512-C544, C550-C561, and C555-C570. Residues 546–583 form the EGF-like 1 domain; the sequence is IKDRCLPNYCEHGGHCAQNWTTFYCNCSDTGYTGATCH. N571 is a glycosylation site (N-linked (GlcNAc...) asparagine). C572 and C582 form a disulfide bridge. Residues 584–790 enclose the Fibrinogen C-terminal domain; it reads DSVYEQSCEV…LRCYGDRHFW (207 aa). N622 carries an N-linked (GlcNAc...) asparagine glycan. Residues 791-956 form the Laminin G-like 3 domain; it reads NAVSFTTEAS…KLMSGVTPGC (166 aa). 4 cysteine pairs are disulfide-bonded: C929–C956, C960–C973, C967–C982, and C984–C994. The region spanning 957–995 is the EGF-like 2 domain; sequence LGHCSSYGSNCLNGGKCVEKQSGYSCDCTNSPNEGPFCQ. The Laminin G-like 4 domain maps to 1014–1198; the sequence is EPYLVIKNTS…VQGTLTESGC (185 aa). N1057 carries an N-linked (GlcNAc...) asparagine glycan. C1163 and C1198 are oxidised to a cystine. A helical transmembrane segment spans residues 1238 to 1258; that stretch reads VIGGIIALVTFVTFCVIGIMI. Residues 1259 to 1305 lie on the Cytoplasmic side of the membrane; it reads HFLYLHKQSHCTNQTKEKEYSENLSNSFRNAIDLQNTASECKREYFI.

Belongs to the neurexin family.

The protein localises to the membrane. Functionally, may play a role in the correct development and proper functioning of the peripheral and central nervous system and be involved in cell adhesion and intercellular communication. The sequence is that of Contactin-associated protein like 5-4 (Cntnap5d) from Rattus norvegicus (Rat).